An 875-amino-acid polypeptide reads, in one-letter code: Kelch-like protein 29 (875 aa).

Residues 113–126 are compositionally biased toward polar residues; that stretch reads IRWGQTPVNQSTPW. Disordered regions lie at residues 113–145 and 240–291; these read IRWG…PGTG and GVGQ…DSAH. Residues 131–140 show a composition bias toward basic and acidic residues; sequence PPSKQMRESD. Residues 270–280 show a composition bias toward low complexity; that stretch reads PSAALPSSVPA. The BTB domain occupies 329–401; the sequence is TDLKIVVEGR…VYTGSLVIDS (73 aa). Kelch repeat units lie at residues 585–635, 637–683, 684–730, 732–778, 779–821, and 822–870; these read VIVL…VSAG, NIYL…VYDG, KIYT…VCGG, IYVF…TLNG, FVFI…VLDG, and KIYA…VIKK.

This is Kelch-like protein 29 (Klhl29) from Mus musculus (Mouse).